Consider the following 411-residue polypeptide: Anthranilate synthase component 1 (411 aa).

L-tryptophan contacts are provided by residues S27 and 203 to 205 (PYM). Chorismate is bound at residue 237-238 (GT). Residue E262 participates in Mg(2+) binding. Chorismate-binding positions include Y350, R369, 382–384 (GAG), and G384. Residue E397 coordinates Mg(2+).

Belongs to the anthranilate synthase component I family. As to quaternary structure, heterotetramer consisting of two non-identical subunits: a beta subunit (TrpG) and a large alpha subunit (TrpE). Mg(2+) is required as a cofactor.

The catalysed reaction is chorismate + L-glutamine = anthranilate + pyruvate + L-glutamate + H(+). It participates in amino-acid biosynthesis; L-tryptophan biosynthesis; L-tryptophan from chorismate: step 1/5. Its activity is regulated as follows. Feedback inhibited by tryptophan. Part of a heterotetrameric complex that catalyzes the two-step biosynthesis of anthranilate, an intermediate in the biosynthesis of L-tryptophan. In the first step, the glutamine-binding beta subunit (TrpG) of anthranilate synthase (AS) provides the glutamine amidotransferase activity which generates ammonia as a substrate that, along with chorismate, is used in the second step, catalyzed by the large alpha subunit of AS (TrpE) to produce anthranilate. In the absence of TrpG, TrpE can synthesize anthranilate directly from chorismate and high concentrations of ammonia. This chain is Anthranilate synthase component 1 (trpE), found in Archaeoglobus fulgidus (strain ATCC 49558 / DSM 4304 / JCM 9628 / NBRC 100126 / VC-16).